Consider the following 562-residue polypeptide: NAD-dependent malic enzyme (562 aa).

Catalysis depends on Tyr101, which acts as the Proton donor. Arg154 lines the NAD(+) pocket. Lys172 serves as the catalytic Proton acceptor. Positions 243, 244, and 267 each coordinate a divalent metal cation. Residues Asp267 and Asn415 each contribute to the NAD(+) site.

It belongs to the malic enzymes family. As to quaternary structure, homotetramer. Requires Mg(2+) as cofactor. It depends on Mn(2+) as a cofactor.

It carries out the reaction (S)-malate + NAD(+) = pyruvate + CO2 + NADH. The catalysed reaction is oxaloacetate + H(+) = pyruvate + CO2. This is NAD-dependent malic enzyme from Shewanella sediminis (strain HAW-EB3).